The following is a 407-amino-acid chain: Probable beta-1,3-galactosyltransferase 4 (407 aa).

A helical; Signal-anchor for type II membrane protein transmembrane segment spans residues 23–39 (WTLFLCIGFFCAGILFS).

This sequence belongs to the glycosyltransferase 31 family. Requires Mn(2+) as cofactor.

The protein localises to the golgi apparatus membrane. The protein operates within protein modification; protein glycosylation. Functionally, beta-1,3-galactosyltransferase that transfers galactose from UDP-galactose to substrates with a terminal glycosyl residue. The protein is Probable beta-1,3-galactosyltransferase 4 (B3GALT4) of Arabidopsis thaliana (Mouse-ear cress).